A 448-amino-acid polypeptide reads, in one-letter code: Tubulin beta-1 chain (448 aa).

Positions 11, 72, 141, 145, 146, 147, 207, and 229 each coordinate GTP. A Mg(2+)-binding site is contributed by glutamate 72. The tract at residues 424-448 (QQYQDAGMDDDEAEEAYEEEEPVEE) is disordered. Acidic residues predominate over residues 430–448 (GMDDDEAEEAYEEEEPVEE).

This sequence belongs to the tubulin family. In terms of assembly, dimer of alpha and beta chains. A typical microtubule is a hollow water-filled tube with an outer diameter of 25 nm and an inner diameter of 15 nM. Alpha-beta heterodimers associate head-to-tail to form protofilaments running lengthwise along the microtubule wall with the beta-tubulin subunit facing the microtubule plus end conferring a structural polarity. Microtubules usually have 13 protofilaments but different protofilament numbers can be found in some organisms and specialized cells. Mg(2+) serves as cofactor.

The protein resides in the cytoplasm. Its subcellular location is the cytoskeleton. Functionally, tubulin is the major constituent of microtubules, a cylinder consisting of laterally associated linear protofilaments composed of alpha- and beta-tubulin heterodimers. Microtubules grow by the addition of GTP-tubulin dimers to the microtubule end, where a stabilizing cap forms. Below the cap, tubulin dimers are in GDP-bound state, owing to GTPase activity of alpha-tubulin. This is Tubulin beta-1 chain (TUB1) from Colletotrichum gloeosporioides (Anthracnose fungus).